We begin with the raw amino-acid sequence, 71 residues long: Protein KleB (71 aa).

Residues 9-28 constitute a DNA-binding region (H-T-H motif); it reads IETCCRRCGKSIRTLSHTII.

This is Protein KleB (kleB) from Escherichia coli.